The primary structure comprises 340 residues: Ketol-acid reductoisomerase (NADP(+)) (340 aa).

Residues 2-182 (AELYYDNQAD…GCTRAGVLRT (181 aa)) form the KARI N-terminal Rossmann domain. NADP(+) contacts are provided by residues 25 to 28 (FGSQ), serine 51, serine 53, and 83 to 86 (DIGQ). Histidine 108 is an active-site residue. Glycine 134 is a binding site for NADP(+). The region spanning 183-328 (TFAEETETDL…RELRRMMPFV (146 aa)) is the KARI C-terminal knotted domain. 4 residues coordinate Mg(2+): aspartate 191, glutamate 195, glutamate 227, and glutamate 231. Serine 252 contributes to the substrate binding site.

It belongs to the ketol-acid reductoisomerase family. Mg(2+) serves as cofactor.

It catalyses the reaction (2R)-2,3-dihydroxy-3-methylbutanoate + NADP(+) = (2S)-2-acetolactate + NADPH + H(+). It carries out the reaction (2R,3R)-2,3-dihydroxy-3-methylpentanoate + NADP(+) = (S)-2-ethyl-2-hydroxy-3-oxobutanoate + NADPH + H(+). It participates in amino-acid biosynthesis; L-isoleucine biosynthesis; L-isoleucine from 2-oxobutanoate: step 2/4. The protein operates within amino-acid biosynthesis; L-valine biosynthesis; L-valine from pyruvate: step 2/4. In terms of biological role, involved in the biosynthesis of branched-chain amino acids (BCAA). Catalyzes an alkyl-migration followed by a ketol-acid reduction of (S)-2-acetolactate (S2AL) to yield (R)-2,3-dihydroxy-isovalerate. In the isomerase reaction, S2AL is rearranged via a Mg-dependent methyl migration to produce 3-hydroxy-3-methyl-2-ketobutyrate (HMKB). In the reductase reaction, this 2-ketoacid undergoes a metal-dependent reduction by NADPH to yield (R)-2,3-dihydroxy-isovalerate. The protein is Ketol-acid reductoisomerase (NADP(+)) of Chloroflexus aggregans (strain MD-66 / DSM 9485).